The following is a 217-amino-acid chain: Ribosomal RNA small subunit methyltransferase G (217 aa).

S-adenosyl-L-methionine contacts are provided by residues Gly-78, Phe-83, Gly-129–Glu-130, and Arg-146.

The protein belongs to the methyltransferase superfamily. RNA methyltransferase RsmG family.

The protein resides in the cytoplasm. It carries out the reaction guanosine(527) in 16S rRNA + S-adenosyl-L-methionine = N(7)-methylguanosine(527) in 16S rRNA + S-adenosyl-L-homocysteine. Its function is as follows. Specifically methylates the N7 position of guanine in position 527 of 16S rRNA. This is Ribosomal RNA small subunit methyltransferase G from Geobacter sulfurreducens (strain ATCC 51573 / DSM 12127 / PCA).